The following is a 125-amino-acid chain: Large ribosomal subunit protein bL19 (125 aa).

It belongs to the bacterial ribosomal protein bL19 family.

This protein is located at the 30S-50S ribosomal subunit interface and may play a role in the structure and function of the aminoacyl-tRNA binding site. This is Large ribosomal subunit protein bL19 from Wolbachia pipientis wMel.